A 77-amino-acid polypeptide reads, in one-letter code: Envelope protein US9 homolog (77 aa).

Positions 12–13 match the Di-leucine internalization motif motif; the sequence is LL.

The protein belongs to the alphaherpesvirinae envelope protein US9 family.

This is Envelope protein US9 homolog from Chlorocebus aethiops (Green monkey).